We begin with the raw amino-acid sequence, 135 residues long: MLRTMLKSKIHRATVTQSDLHYVGSVTIDADLMDAADLIEGEQVTIVDIDNGNRLVTYAITGARGSGVIGINGAAAHLVHPGDLVILIAYGTMEDAEARAYQPRVVFVDADNRQVHLGADPAMVPDTAVDLMSPR.

Residue serine 25 is the Schiff-base intermediate with substrate; via pyruvic acid of the active site. A Pyruvic acid (Ser) modification is found at serine 25. Residue threonine 57 coordinates substrate. Tyrosine 58 (proton donor) is an active-site residue. 73–75 (GAA) serves as a coordination point for substrate.

The protein belongs to the PanD family. In terms of assembly, heterooctamer of four alpha and four beta subunits. Requires pyruvate as cofactor. Is synthesized initially as an inactive proenzyme, which is activated by self-cleavage at a specific serine bond to produce a beta-subunit with a hydroxyl group at its C-terminus and an alpha-subunit with a pyruvoyl group at its N-terminus.

The protein localises to the cytoplasm. The enzyme catalyses L-aspartate + H(+) = beta-alanine + CO2. The protein operates within cofactor biosynthesis; (R)-pantothenate biosynthesis; beta-alanine from L-aspartate: step 1/1. Its function is as follows. Catalyzes the pyruvoyl-dependent decarboxylation of aspartate to produce beta-alanine. This is Aspartate 1-decarboxylase from Mycobacterium sp. (strain JLS).